Consider the following 54-residue polypeptide: uncharacterized protein (54 aa).

The chain crosses the membrane as a helical span at residues 21-43 (SYVVCLYMCGSDCACICVLACVV).

The protein resides in the membrane. This is an uncharacterized protein from Saccharomyces cerevisiae (strain ATCC 204508 / S288c) (Baker's yeast).